Reading from the N-terminus, the 209-residue chain is Large ribosomal subunit protein bL25 (209 aa).

The segment at 185–209 (SKATTGEEEGAEAAGEGEEAEEKPE) is disordered. Over residues 190–209 (GEEEGAEAAGEGEEAEEKPE) the composition is skewed to acidic residues.

The protein belongs to the bacterial ribosomal protein bL25 family. CTC subfamily. In terms of assembly, part of the 50S ribosomal subunit; part of the 5S rRNA/L5/L18/L25 subcomplex. Contacts the 5S rRNA. Binds to the 5S rRNA independently of L5 and L18.

In terms of biological role, this is one of the proteins that binds to the 5S RNA in the ribosome where it forms part of the central protuberance. The chain is Large ribosomal subunit protein bL25 from Syntrophomonas wolfei subsp. wolfei (strain DSM 2245B / Goettingen).